The primary structure comprises 418 residues: Light-independent protochlorophyllide reductase subunit N (418 aa).

3 residues coordinate [4Fe-4S] cluster: C17, C42, and C103.

It belongs to the BchN/ChlN family. Protochlorophyllide reductase is composed of three subunits; ChlL, ChlN and ChlB. Forms a heterotetramer of two ChlB and two ChlN subunits. [4Fe-4S] cluster is required as a cofactor.

It carries out the reaction chlorophyllide a + oxidized 2[4Fe-4S]-[ferredoxin] + 2 ADP + 2 phosphate = protochlorophyllide a + reduced 2[4Fe-4S]-[ferredoxin] + 2 ATP + 2 H2O. The protein operates within porphyrin-containing compound metabolism; chlorophyll biosynthesis (light-independent). In terms of biological role, component of the dark-operative protochlorophyllide reductase (DPOR) that uses Mg-ATP and reduced ferredoxin to reduce ring D of protochlorophyllide (Pchlide) to form chlorophyllide a (Chlide). This reaction is light-independent. The NB-protein (ChlN-ChlB) is the catalytic component of the complex. This is Light-independent protochlorophyllide reductase subunit N from Prochlorococcus marinus (strain MIT 9313).